The primary structure comprises 244 residues: Sperm-egg fusion protein Juno (244 aa).

Positions 1–19 (MAQWWLILLGLWTVLPSLA) are cleaved as a signal peptide. 8 disulfides stabilise this stretch: cysteine 27/cysteine 55, cysteine 47/cysteine 95, cysteine 56/cysteine 99, cysteine 79/cysteine 166, cysteine 86/cysteine 137, cysteine 126/cysteine 200, cysteine 130/cysteine 180, and cysteine 143/cysteine 160. The tract at residues 62 to 81 (WEAHLDEPLLFNFSMTHCGL) is important for interaction with IZUMO1. N-linked (GlcNAc...) asparagine glycosylation is present at asparagine 73. A propeptide spanning residues 223–244 (SASAPQLSYSITAFSLCLLLHA) is cleaved from the precursor.

It belongs to the folate receptor family. Monomer. Interacts with IZUMO1; the interaction is direct. IZUMO1 and IZUMO1R/JUNO form a complex with 1:1 stoichiometry. Interacts with FCRL3/MAIA; FCRL3/MAIA replaces IZUMO1R/JUNO as IZUMO1 receptor after sperm-egg adhesion, thereby permitting species-specific gamete fusion. Interacts with WDR54. Post-translationally, the protein is rapidly cleaved following fertilization, being only weakly detectable in zona-intact fertilized eggs at telophase II and undetectable at the pronuclear stage. Sheding is probably required to block to polyspermy and ensuring egg fusion with a single sperm. Expressed in the oocyte (at protein level).

It is found in the cell membrane. The protein localises to the cell projection. Its subcellular location is the microvillus membrane. In terms of biological role, receptor for IZUMO1 present at the cell surface of oocytes (oolemma), which is essential for species-specific gamete recognition and fertilization. The IZUMO1:IZUMO1R/JUNO interaction is a necessary adhesion event between sperm and egg that is required for fertilization but is not sufficient for cell fusion. The ligand-receptor interaction probably does not act as a membrane 'fusogen'. Does not bind folate. The chain is Sperm-egg fusion protein Juno (Izumo1r) from Rattus norvegicus (Rat).